The chain runs to 239 residues: Putative GEM-like protein 3 (239 aa).

Positions 29-68 (HWNPELVSESPAPDEKALSSSSAARSNPYVARAPTETSDA) are disordered. A GRAM domain is found at 128-191 (KIFRQTFETV…HQLKSVNPSI (64 aa)).

The protein belongs to the GEM family.

This chain is Putative GEM-like protein 3, found in Arabidopsis thaliana (Mouse-ear cress).